The primary structure comprises 288 residues: Nucleotide-binding protein Gura_2968 (288 aa).

Residue 8–15 (GLSGSGKS) coordinates ATP. 59–62 (DIRG) is a binding site for GTP.

It belongs to the RapZ-like family.

Functionally, displays ATPase and GTPase activities. The polypeptide is Nucleotide-binding protein Gura_2968 (Geotalea uraniireducens (strain Rf4) (Geobacter uraniireducens)).